The primary structure comprises 451 residues: F-box only protein 47 (451 aa).

The region spanning 41–91 is the F-box domain; that stretch reads LGNFKVLPLEILHIILRYLSVKDIGMLSMVSKTVSQHIINYISTSSGSRRL.

In terms of assembly, part of a SCF (SKP1-cullin-F-box) protein ligase complex.

Probably recognizes and binds to some phosphorylated proteins and promotes their ubiquitination and degradation. The chain is F-box only protein 47 (Fbxo47) from Mus musculus (Mouse).